The following is a 282-amino-acid chain: Shikimate dehydrogenase (NADP(+)) (282 aa).

Residues 16-18 (SLS) and T63 each bind shikimate. Catalysis depends on K67, which acts as the Proton acceptor. Residues N88 and D103 each coordinate shikimate. NADP(+)-binding positions include 128 to 132 (GAGGA) and G243.

It belongs to the shikimate dehydrogenase family. In terms of assembly, homodimer.

The catalysed reaction is shikimate + NADP(+) = 3-dehydroshikimate + NADPH + H(+). Its pathway is metabolic intermediate biosynthesis; chorismate biosynthesis; chorismate from D-erythrose 4-phosphate and phosphoenolpyruvate: step 4/7. Its function is as follows. Involved in the biosynthesis of the chorismate, which leads to the biosynthesis of aromatic amino acids. Catalyzes the reversible NADPH linked reduction of 3-dehydroshikimate (DHSA) to yield shikimate (SA). This is Shikimate dehydrogenase (NADP(+)) from Xylella fastidiosa (strain Temecula1 / ATCC 700964).